The following is a 321-amino-acid chain: High osmolarity signaling protein SHO1A (321 aa).

Residues 1–28 (MDYNNNRYGGGGGGSKFNLGHIVGDPFS) lie on the Cytoplasmic side of the membrane. A helical membrane pass occupies residues 29–49 (LATIAIATAGWLIAFVSSIIA). Topologically, residues 50-58 (NIDQEYPNY) are extracellular. The N-linked (GlcNAc...) asparagine glycan is linked to Asn-57. A helical membrane pass occupies residues 59–79 (SWWALAYMFFVILGVTFAVAA). Residue Asn-80 is a topological domain, cytoplasmic. The helical transmembrane segment at 81–101 (AVYTYHVAMVGFLAAGLVFTT) threads the bilayer. Over 102–116 (SSVNSLIYWSDKAKQ) the chain is Extracellular. Residues 117–137 (AAAAGFILLSMVSIVWIFYFG) traverse the membrane as a helical segment. Over 138–321 (SQPTASHRQT…IAPSNYLILL (184 aa)) the chain is Cytoplasmic. Disordered stretches follow at residues 155 to 181 (KDHAPSRASRHMTQSYRPETTHSAQHP) and 194 to 261 (TSSP…QQPT). Polar residues-rich tracts occupy residues 165–181 (HMTQSYRPETTHSAQHP) and 225–237 (NFSNNQQPNPITS). Positions 238–249 (QNNPQNQHQQPQ) are enriched in low complexity. Positions 250 to 261 (DLTSPSTTQQPT) are enriched in polar residues. Residues 262–321 (EYPYRAKAIYSYEANPDDANEISFNKHEILEVSDVSGRWWQAKKENGETGIAPSNYLILL) form the SH3 domain.

This sequence belongs to the SHO1 family. Forms homooligomers.

The protein resides in the cell membrane. Its function is as follows. Plasma membrane osmosensor that activates the high osmolarity glycerol (HOG) MAPK signaling pathway in response to high osmolarity. The chain is High osmolarity signaling protein SHO1A (SHO1A) from Hortaea werneckii.